The following is a 579-amino-acid chain: MSETLATDATAPAEKKDFIRQIVREDLASGKHTVIRTRFPPEPNGYLHIGHAKAICLDFGLAAEFGGLCNLRLDDTNPAKEDPEFVVAIQDDVRWLGYEWAQLRHASDYFQVYYLAAQKLIRDGHAFVCDLSAEQVRQYRGTLTEPGRNSPFRERSVEENLELFARMRAGEFPDGARTLRAKIDMASGNINLRDPALYRIKHVEHQNTGNAWPIYPMYDFAHSLGDAVEGITHSLCTLEFEDHRPLYDWCVDKVDLAGHPELLQPLLDKGLPREAAKPRQIEFSRLNINYTVMSKRKLTALVEEQLVDGWDDPRMYTLQGLRRRGYTPAAMRLFVDRVGISKQNSLIDFSVLEGCLREDLDAAAPRRMAVIDPLKLVLTNLPEGHTETLQFSNHPKDESFGTREVPFARELWIEREDFAEVPPKGWKRLVPGGEIRLRGAGIARVDEVIKNADGEIVELRGWLDPESRPGMEGANRKVKGTIHWVSAVHAVEAEIRLYDRLFSVEKPDDESEGKTYRDYLNPESKRNVRGYVEPSAAMAAPEQAFQFERSGYFVADRRDHSAATPVFNRSVTLRDTWAK.

Residues 41–51 (PEPNGYLHIGH) carry the 'HIGH' region motif. ATP-binding positions include 42–44 (EPN) and 48–54 (HIGHAKA). 2 residues coordinate L-glutamine: Asp74 and Tyr218. ATP-binding positions include Thr237, 285–286 (RL), and 293–295 (MSK). Residues 292–296 (VMSKR) carry the 'KMSKS' region motif.

This sequence belongs to the class-I aminoacyl-tRNA synthetase family. As to quaternary structure, monomer.

It is found in the cytoplasm. It carries out the reaction tRNA(Gln) + L-glutamine + ATP = L-glutaminyl-tRNA(Gln) + AMP + diphosphate. The sequence is that of Glutamine--tRNA ligase from Xanthomonas euvesicatoria pv. vesicatoria (strain 85-10) (Xanthomonas campestris pv. vesicatoria).